A 288-amino-acid chain; its full sequence is Light-independent protochlorophyllide reductase iron-sulfur ATP-binding protein (288 aa).

ATP contacts are provided by residues 10–15 and Lys39; that span reads GIGKST. Ser14 contacts Mg(2+). [4Fe-4S] cluster contacts are provided by Cys95 and Cys129. 180–181 contributes to the ATP binding site; sequence NR.

The protein belongs to the NifH/BchL/ChlL family. In terms of assembly, homodimer. Protochlorophyllide reductase is composed of three subunits; ChlL, ChlN and ChlB. It depends on [4Fe-4S] cluster as a cofactor.

It carries out the reaction chlorophyllide a + oxidized 2[4Fe-4S]-[ferredoxin] + 2 ADP + 2 phosphate = protochlorophyllide a + reduced 2[4Fe-4S]-[ferredoxin] + 2 ATP + 2 H2O. Its pathway is porphyrin-containing compound metabolism; chlorophyll biosynthesis (light-independent). Component of the dark-operative protochlorophyllide reductase (DPOR) that uses Mg-ATP and reduced ferredoxin to reduce ring D of protochlorophyllide (Pchlide) to form chlorophyllide a (Chlide). This reaction is light-independent. The L component serves as a unique electron donor to the NB-component of the complex, and binds Mg-ATP. This chain is Light-independent protochlorophyllide reductase iron-sulfur ATP-binding protein, found in Trichodesmium erythraeum (strain IMS101).